The chain runs to 605 residues: Kelch-like protein 26 (605 aa).

Residues 53 to 120 (LDVVLAIDNE…AYSSEVTLDL (68 aa)) form the BTB domain. Positions 155–256 (CLNIGQMATT…RSSELVDSVQ (102 aa)) constitute a BACK domain. 6 Kelch repeats span residues 300-351 (SLIT…VLDN), 352-403 (FVYV…VLDG), 404-450 (QLYA…TCGD), 452-498 (LYIS…SANN), 499-549 (RIYA…LLDK), and 551-598 (IYIV…PIIL).

Functionally, may play a role in endo(sarco)plasmic reticulum (ER/SR) mitochondrial signaling. May be part of the ubiquitin-proteasome system (UPS) and affect ubiquitination and degradation of target substrates. The chain is Kelch-like protein 26 (klhl26) from Danio rerio (Zebrafish).